The primary structure comprises 331 residues: Phospho-N-acetylmuramoyl-pentapeptide-transferase (331 aa).

The next 9 helical transmembrane spans lie at 7–27, 54–74, 78–98, 106–126, 133–153, 154–174, 195–215, 249–269, and 311–331; these read IIYTIIIGFIITLILGPLTIP, TIGGIILIMSIIITSLTSGLI, LWIALAATVAFGIIGFIDDFI, LGLRAYQKLILQGTIAVILAI, IMGTEVIVPFVGEGITIAGFT, ITQTIDLGILYIPFIVFVVVA, IIAAFFALVAMSWGYVSLAIF, AIATIAVLMNVVLIIPIVGGI, and VVIVFWVVTVILCLVGMLALS.

Belongs to the glycosyltransferase 4 family. MraY subfamily. Requires Mg(2+) as cofactor.

It is found in the cell membrane. It catalyses the reaction UDP-N-acetyl-alpha-D-muramoyl-L-alanyl-gamma-D-glutamyl-meso-2,6-diaminopimeloyl-D-alanyl-D-alanine + di-trans,octa-cis-undecaprenyl phosphate = di-trans,octa-cis-undecaprenyl diphospho-N-acetyl-alpha-D-muramoyl-L-alanyl-D-glutamyl-meso-2,6-diaminopimeloyl-D-alanyl-D-alanine + UMP. It functions in the pathway cell wall biogenesis; peptidoglycan biosynthesis. Its function is as follows. Catalyzes the initial step of the lipid cycle reactions in the biosynthesis of the cell wall peptidoglycan: transfers peptidoglycan precursor phospho-MurNAc-pentapeptide from UDP-MurNAc-pentapeptide onto the lipid carrier undecaprenyl phosphate, yielding undecaprenyl-pyrophosphoryl-MurNAc-pentapeptide, known as lipid I. This chain is Phospho-N-acetylmuramoyl-pentapeptide-transferase, found in Alkaliphilus metalliredigens (strain QYMF).